We begin with the raw amino-acid sequence, 403 residues long: 26S proteasome regulatory subunit 6B homolog (403 aa).

Methionine 1 carries the N-acetylmethionine modification. 191–198 (GPPGTGKT) provides a ligand contact to ATP.

Belongs to the AAA ATPase family.

It localises to the cytoplasm. The protein localises to the nucleus. The 26S proteasome is involved in the ATP-dependent degradation of ubiquitinated proteins. The regulatory (or ATPase) complex confers ATP dependency and substrate specificity to the 26S complex. In Dictyostelium discoideum (Social amoeba), this protein is 26S proteasome regulatory subunit 6B homolog (psmC4).